A 343-amino-acid polypeptide reads, in one-letter code: TATA box-binding protein-like 2 (343 aa).

Residues 71–152 are disordered; the sequence is PDEVTQENKD…SDSLSLASIT (82 aa). Residues 76–90 are compositionally biased toward basic and acidic residues; sequence QENKDQPVISKHETE. Residues 94-127 show a composition bias toward low complexity; that stretch reads ESQSPQSRLPSPSEQDVGLGLNSSSLSNSHSQLH. Over residues 143–152 the composition is skewed to polar residues; sequence SDSLSLASIT.

The protein belongs to the TBP family. As to quaternary structure, interacts with TAF3. As to expression, ubiquitously expressed in all tissues examined with highest levels in heart, lung, ovary, spleen and testes.

It is found in the cytoplasm. It localises to the nucleus. Transcription factor required in complex with TAF3 for the differentiation of myoblasts into myocytes. The complex replaces TFIID at specific promoters at an early stage in the differentiation process. This is TATA box-binding protein-like 2 from Homo sapiens (Human).